A 530-amino-acid polypeptide reads, in one-letter code: Capsid protein VP1 (530 aa).

The disordered stretch occupies residues 1-20 (MMMASKDATSSVDGASGAGQ). The interval 1 to 225 (MMMASKDATS…FLFLVPPTVE (225 aa)) is shell domain. The P1 sub-domain 1 stretch occupies residues 226–278 (QKTRPFTLPNLPLSSLSNSRAPLPISSMGISPDNVQSVQFQNGRCTLDGRLVG). Positions 226-530 (QKTRPFTLPN…SARGRLGLRR (305 aa)) are protruding domain. Residues 279 to 405 (TTPVSLSHVA…GSSITEATHL (127 aa)) are P2 sub-domain. Residues 406–530 (APSVYPPGFG…SARGRLGLRR (125 aa)) form a P1 sub-domain 2 region. Residues 523 to 530 (RGRLGLRR) form a plays a role in binding to host histo-blood group structures antigens and in the formation of P-particles region.

It belongs to the caliciviridae capsid protein family. In terms of assembly, homodimer. Homomultimer. Interacts with the minor capsid protein VP2. Interacts (via C-terminus) with host type I histo-blood group structures antigens at the surface of target cells. In terms of processing, may be cleaved by host protease to generate soluble capsid protein. Assembled capsid cannot be cleaved.

It is found in the virion. It localises to the host cytoplasm. Capsid protein self assembles to form an icosahedral capsid with a T=3 symmetry, about 38 nm in diameter, and consisting of 180 capsid proteins. A smaller form of capsid with a diameter of 23 nm might be capsid proteins assembled as icosahedron with T=1 symmetry. The capsid encapsulates the genomic RNA and is decorated with VP2 proteins. Attaches virion to target cells by binding histo-blood group antigens (HBGAs) present on gastroduodenal epithelial cells. Functionally, the soluble capsid protein may play a role in viral immunoevasion. This Norovirus (strain Human/NoV/United States/Norwalk/1968/GI) (Hu/NV/NV/1968/US) protein is Capsid protein VP1.